The chain runs to 658 residues: Exoribonuclease 2 (658 aa).

Residues 189 to 531 enclose the RNB domain; sequence REDLTALHFI…NHRLIKAVLT (343 aa). The region spanning 576–658 is the S1 motif domain; it reads KPTFQAEIQD…ETRSIVGTLC (83 aa).

The protein belongs to the RNR ribonuclease family. RNase II subfamily.

The protein resides in the cytoplasm. The enzyme catalyses Exonucleolytic cleavage in the 3'- to 5'-direction to yield nucleoside 5'-phosphates.. Functionally, involved in mRNA degradation. Hydrolyzes single-stranded polyribonucleotides processively in the 3' to 5' direction. This Pasteurella multocida (strain Pm70) protein is Exoribonuclease 2.